A 309-amino-acid polypeptide reads, in one-letter code: Uricase-2 isozyme 1 (309 aa).

Active-site charge relay system residues include lysine 18 and threonine 64. The urate site is built by threonine 64, aspartate 65, phenylalanine 166, arginine 183, valine 238, glutamine 239, and asparagine 265. Histidine 267 functions as the Charge relay system in the catalytic mechanism. A Microbody targeting signal motif is present at residues 307–309 (SKL).

This sequence belongs to the uricase family. Homotetramer. The N-terminus is blocked. In terms of tissue distribution, expressed predominantly in the uninfected cells of the central tissue of the root nodule.

The protein resides in the peroxisome. It carries out the reaction urate + O2 + H2O = 5-hydroxyisourate + H2O2. Its pathway is purine metabolism; urate degradation; (S)-allantoin from urate: step 1/3. Functionally, catalyzes the oxidation of uric acid to 5-hydroxyisourate, which is further processed to form (S)-allantoin. The sequence is that of Uricase-2 isozyme 1 from Glycine max (Soybean).